The primary structure comprises 118 residues: Developmental pluripotency-associated protein 5A (118 aa).

Residues 24 to 86 (PEVFQVQSLV…NNKIRAKWML (63 aa)) enclose the KH; atypical domain.

This sequence belongs to the KHDC1 family.

It is found in the cytoplasm. Involved in the maintenance of embryonic stem (ES) cell pluripotency. Dispensable for self-renewal of pluripotent ES cells and establishment of germ cells. Associates with specific target mRNAs. This is Developmental pluripotency-associated protein 5A (Dppa5a) from Mus musculus (Mouse).